The chain runs to 344 residues: Heat-inducible transcription repressor HrcA (344 aa).

It belongs to the HrcA family.

Negative regulator of class I heat shock genes (grpE-dnaK-dnaJ and groELS operons). Prevents heat-shock induction of these operons. The protein is Heat-inducible transcription repressor HrcA of Streptococcus agalactiae serotype Ia (strain ATCC 27591 / A909 / CDC SS700).